A 267-amino-acid polypeptide reads, in one-letter code: MEMO1 family protein aq_890 (267 aa).

Belongs to the MEMO1 family.

The polypeptide is MEMO1 family protein aq_890 (Aquifex aeolicus (strain VF5)).